A 245-amino-acid polypeptide reads, in one-letter code: UDP-N-acetyl-D-mannosaminuronic acid transferase (245 aa).

This sequence belongs to the glycosyltransferase 26 family.

It catalyses the reaction UDP-N-acetyl-alpha-D-mannosaminouronate + N-acetyl-alpha-D-glucosaminyl-di-trans,octa-cis-undecaprenyl diphosphate = beta-D-ManNAcA-(1-&gt;4)-alpha-D-GlcNAc-di-trans,octa-cis-undecaprenyl diphosphate + UDP + H(+). It functions in the pathway bacterial outer membrane biogenesis; enterobacterial common antigen biosynthesis. In terms of biological role, catalyzes the synthesis of Und-PP-GlcNAc-ManNAcA (Lipid II), the second lipid-linked intermediate involved in enterobacterial common antigen (ECA) synthesis. The protein is UDP-N-acetyl-D-mannosaminuronic acid transferase of Photorhabdus laumondii subsp. laumondii (strain DSM 15139 / CIP 105565 / TT01) (Photorhabdus luminescens subsp. laumondii).